Here is a 290-residue protein sequence, read N- to C-terminus: Secreted chorismate mutase (290 aa).

Residues M1 to A21 form the signal peptide. The KWL1-binding extensive loop region (ELR) stretch occupies residues V117–R140. N159 and N208 each carry an N-linked (GlcNAc...) asparagine glycan.

In terms of assembly, homodimer. Forms a heterodimer with the host cytosolic chorismate mutase CM2. Interacts with the host kiwellin KWL1 which acts as a defense protein that protects maize from infection.

Its subcellular location is the secreted. It is found in the host cytoplasm. The protein resides in the host cytosol. It carries out the reaction chorismate = prephenate. With respect to regulation, contrary to classical chorismate mutases, CMU1 is not subject to allosteric regulation by tryptophan and tyrosine. Activity is decreased in a non-competitive and allosteric manner by the binding of the host defense kiwellin KWL1 which probably blocks substrate access to the active site of CMU1. Its function is as follows. Secreted chorismate mutase that is one component of a cocktail of effectors shaping the host metabolome and acting as virulence factors. The enzyme is taken up by plant cells, can spread to neighboring cells where it affects the biosynthesis of the plant immune signal salicylic acid by channelling chorismate into the phenylpropanoid pathway. Interferes with the activity of host cytosolic chorismate mutase CM2 through heterodimerization. In Mycosarcoma maydis (Corn smut fungus), this protein is Secreted chorismate mutase (CMU1).